The chain runs to 693 residues: Polyribonucleotide nucleotidyltransferase (693 aa).

Residues Asp-486 and Asp-492 each coordinate Mg(2+). The 60-residue stretch at 553 to 612 (PRFSSMRIDTEKIKDVIGKGGATIRSITEQTGTTIEIEDDGSVKIAATDKAAAANARRLI) folds into the KH domain. The S1 motif domain occupies 622–690 (GRIYDAKVTK…RQGRVRLSIK (69 aa)).

This sequence belongs to the polyribonucleotide nucleotidyltransferase family. Component of the RNA degradosome, which is a multiprotein complex involved in RNA processing and mRNA degradation. It depends on Mg(2+) as a cofactor.

The protein localises to the cytoplasm. The catalysed reaction is RNA(n+1) + phosphate = RNA(n) + a ribonucleoside 5'-diphosphate. In terms of biological role, involved in mRNA degradation. Catalyzes the phosphorolysis of single-stranded polyribonucleotides processively in the 3'- to 5'-direction. This is Polyribonucleotide nucleotidyltransferase from Dichelobacter nodosus (strain VCS1703A).